Consider the following 1752-residue polypeptide: Chitin synthase E (1752 aa).

1 to 8 (GESGSGKT) is a binding site for ATP. Positions 492-520 (SSKPLRMPSMARRKTSPSSRLAFDAGDAD) are disordered. The interval 558-582 (LDIVNKCLSSTNLNPYFIFCLKPND) is actin-binding. 2 helical membrane passes run 789–809 (WIAL…KLFG) and 828–848 (LIIW…PGLV). Residues 852 to 940 (QHVYSAAELS…LLDYRPTNIS (89 aa)) form the Cytochrome b5 heme-binding domain. N-linked (GlcNAc...) asparagine glycosylation is found at asparagine 938 and asparagine 963. A helical membrane pass occupies residues 1099-1119 (FILAISVLICSIIVFKFLAAL). Residues asparagine 1322, asparagine 1356, and asparagine 1462 are each glycosylated (N-linked (GlcNAc...) asparagine). A run of 3 helical transmembrane segments spans residues 1494-1514 (LSTV…YWLV), 1520-1540 (IPYT…LIFI), and 1547-1567 (MVGW…PCPS). N-linked (GlcNAc...) asparagine glycosylation occurs at asparagine 1685. In terms of domain architecture, DEK-C spans 1689 to 1744 (LPSDDAILAEIREILRTADLMSVTKKSIKLELERAFGVNLDLKRPYINSGKGYTFP).

It in the N-terminal section; belongs to the TRAFAC class myosin-kinesin ATPase superfamily. Myosin family. In the C-terminal section; belongs to the chitin synthase family. Class V subfamily.

It localises to the cell membrane. The protein resides in the cell septum. The protein localises to the cell tip. The enzyme catalyses [(1-&gt;4)-N-acetyl-beta-D-glucosaminyl](n) + UDP-N-acetyl-alpha-D-glucosamine = [(1-&gt;4)-N-acetyl-beta-D-glucosaminyl](n+1) + UDP + H(+). Its function is as follows. Polymerizes chitin, a structural polymer of the cell wall and septum, by transferring the sugar moiety of UDP-GlcNAc to the non-reducing end of the growing chitin polymer. Important for hyphal growth and conidiophore development but not pathogenicity. The chain is Chitin synthase E from Aspergillus fumigatus (Neosartorya fumigata).